The chain runs to 249 residues: MSGLLDLLEIRKAYGDTRVLEGVALSLAPGEVVSLLGPSGCGKSTLLRIAAGLDDDFQGTVERNPILGFGPDGENGRSGGIGVVFQEPRLLPWLTVAQNVGFADGWLEDEHWVERLLADVGLAGCGGLLPKQLSGGMAQRAAIARGLYGRPQVLLLDEPFSAVDAFTRMRLQDLLQDVVQNYEISVLLVTHDLDEAFYLADRVLLMGGRPGHIRREFHVPLARPRDRRAVELAYLRGEALTEMQRAHVL.

The ABC transporter domain maps to 5–233 (LDLLEIRKAY…PRDRRAVELA (229 aa)). Position 37–44 (37–44 (GPSGCGKS)) interacts with ATP.

This sequence belongs to the ABC transporter superfamily. Aliphatic sulfonates importer (TC 3.A.1.17.2) family. In terms of assembly, the complex is composed of two ATP-binding proteins (SsuB), two transmembrane proteins (SsuC) and a solute-binding protein (SsuA).

Its subcellular location is the cell inner membrane. The enzyme catalyses ATP + H2O + aliphatic sulfonate-[sulfonate-binding protein]Side 1 = ADP + phosphate + aliphatic sulfonateSide 2 + [sulfonate-binding protein]Side 1.. Functionally, part of the ABC transporter complex SsuABC involved in aliphatic sulfonates import. Responsible for energy coupling to the transport system. The protein is Aliphatic sulfonates import ATP-binding protein SsuB 2 of Pseudomonas aeruginosa (strain ATCC 15692 / DSM 22644 / CIP 104116 / JCM 14847 / LMG 12228 / 1C / PRS 101 / PAO1).